The sequence spans 338 residues: Inorganic pyrophosphatase (338 aa).

Residue arginine 129 coordinates diphosphate. 3 residues coordinate Mg(2+): aspartate 166, aspartate 171, and aspartate 203.

The protein belongs to the PPase family. As to quaternary structure, component of the NURF complex composed of Caf1-55, E(bx), Nurf-38 and Iswi. The cofactor is Mg(2+).

Its subcellular location is the cytoplasm. It localises to the nucleus. The catalysed reaction is diphosphate + H2O = 2 phosphate + H(+). Component of NURF (nucleosome remodeling factor), a complex which catalyzes ATP-dependent nucleosome sliding and facilitates transcription of chromatin. NURF is required for homeotic gene expression, proper larval blood cell development, normal male X chromosome morphology, ecdysteroid signaling and metamorphosis. Inorganic pyrophosphatase (PPase), hydrolyzes inorganic pyrophosphate to inorganic phosphate, essential for driving critical biosynthetic reactions including transcription, replication, and DNA repair. The sequence is that of Inorganic pyrophosphatase (Nurf-38) from Drosophila melanogaster (Fruit fly).